The primary structure comprises 349 residues: Very-long-chain 3-oxoacyl-CoA reductase (349 aa).

The helical transmembrane segment at 19 to 39 threads the bilayer; that stretch reads AIIFALLLGVFKLTVFSLKFA. NADP(+) contacts are provided by valine 65, aspartate 119, asparagine 146, tyrosine 221, lysine 225, valine 254, and serine 256. The active-site Proton donor is tyrosine 221. Lysine 225 (lowers pKa of active site Tyr) is an active-site residue.

Belongs to the short-chain dehydrogenases/reductases (SDR) family.

The protein localises to the endoplasmic reticulum membrane. It carries out the reaction a very-long-chain (3R)-3-hydroxyacyl-CoA + NADP(+) = a very-long-chain 3-oxoacyl-CoA + NADPH + H(+). It functions in the pathway lipid metabolism; fatty acid biosynthesis. In terms of biological role, component of the microsomal membrane bound fatty acid elongation system, which produces the 26-carbon very long-chain fatty acids (VLCFA) from palmitate. Catalyzes the reduction of the 3-ketoacyl-CoA intermediate that is formed in each cycle of fatty acid elongation. VLCFAs serve as precursors for ceramide and sphingolipids. The polypeptide is Very-long-chain 3-oxoacyl-CoA reductase (Candida albicans (strain SC5314 / ATCC MYA-2876) (Yeast)).